Here is a 316-residue protein sequence, read N- to C-terminus: GMP reductase (316 aa).

The active-site Thioimidate intermediate is cysteine 175. 202-225 (VIADGGIVEHGDIAKALVCGATMV) contacts NADP(+).

Belongs to the IMPDH/GMPR family. GuaC type 2 subfamily.

It carries out the reaction IMP + NH4(+) + NADP(+) = GMP + NADPH + 2 H(+). In terms of biological role, catalyzes the irreversible NADPH-dependent deamination of GMP to IMP. It functions in the conversion of nucleobase, nucleoside and nucleotide derivatives of G to A nucleotides, and in maintaining the intracellular balance of A and G nucleotides. The sequence is that of GMP reductase from Chromobacterium violaceum (strain ATCC 12472 / DSM 30191 / JCM 1249 / CCUG 213 / NBRC 12614 / NCIMB 9131 / NCTC 9757 / MK).